The following is a 602-amino-acid chain: Pentatricopeptide repeat-containing protein At5g11310, mitochondrial (602 aa).

The N-terminal 35 residues, 1 to 35 (MNSLFTAFRRNLLLNPNPHRNFFLHRLLSSSRRSS), are a transit peptide targeting the mitochondrion. 11 PPR repeats span residues 134–165 (SPSL…VRSD), 172–202 (SADT…ARSY), 211–241 (ELRL…IGGT), 249–283 (SVRI…NVKP), 284–318 (TVVT…EMEI), 319–353 (NFMV…ESGP), 354–388 (TIVT…GVDP), 389–423 (TTTT…GHSP), 424–458 (DRLT…GIDP), 459–493 (DLLT…GIIP), and 494–528 (QYIT…PHSK).

The protein belongs to the PPR family. P subfamily.

Its subcellular location is the mitochondrion. The sequence is that of Pentatricopeptide repeat-containing protein At5g11310, mitochondrial from Arabidopsis thaliana (Mouse-ear cress).